Here is a 173-residue protein sequence, read N- to C-terminus: Nucleoside-triphosphatase THEP1 (173 aa).

ATP contacts are provided by residues 9 to 16 (GPPGVGKT) and 97 to 104 (LYVIDEVG).

This sequence belongs to the THEP1 NTPase family.

It catalyses the reaction a ribonucleoside 5'-triphosphate + H2O = a ribonucleoside 5'-diphosphate + phosphate + H(+). Has nucleotide phosphatase activity towards ATP, GTP, CTP, TTP and UTP. May hydrolyze nucleoside diphosphates with lower efficiency. This chain is Nucleoside-triphosphatase THEP1, found in Caldivirga maquilingensis (strain ATCC 700844 / DSM 13496 / JCM 10307 / IC-167).